The primary structure comprises 313 residues: WD repeat-containing protein 82 (313 aa).

6 WD repeats span residues Glu19–Thr58, Gly105–Leu144, His146–Phe184, Asp192–Thr231, Asn236–Val276, and Lys280–Asp313.

This sequence belongs to the WD repeat SWD2 family. In terms of assembly, component of the SET1/COMPASS complex. Component of the PNUTS-PP1 phosphatase complex.

It localises to the nucleus. The protein localises to the chromosome. The protein resides in the cytoplasm. Functionally, regulatory component of the SET1/COMPASS complex implicated in the tethering of this complex to transcriptional start sites of active genes. Facilitates histone H3 'Lys-4' methylation (H3K4me) via recruitment of the SETD1A or SETD1B to the 'Ser-5' phosphorylated C-terminal domain (CTD) of RNA polymerase II large subunit (POLR2A). Component of the PNUTS-PP1 protein phosphatase complex, a protein phosphatase 1 (PP1) complex that promotes RNA polymerase II transcription pause-release, allowing transcription elongation. This is WD repeat-containing protein 82 (wdr82) from Xenopus tropicalis (Western clawed frog).